We begin with the raw amino-acid sequence, 264 residues long: Glucosamine-6-phosphate deaminase (264 aa).

The active-site Proton acceptor; for enolization step is Asp-67. Residue Asn-136 is the For ring-opening step of the active site. Residue His-138 is the Proton acceptor; for ring-opening step of the active site. Glu-143 acts as the For ring-opening step in catalysis.

This sequence belongs to the glucosamine/galactosamine-6-phosphate isomerase family. NagB subfamily. As to quaternary structure, homohexamer.

It carries out the reaction alpha-D-glucosamine 6-phosphate + H2O = beta-D-fructose 6-phosphate + NH4(+). It participates in amino-sugar metabolism; N-acetylneuraminate degradation; D-fructose 6-phosphate from N-acetylneuraminate: step 5/5. Its function is as follows. Catalyzes the reversible isomerization-deamination of glucosamine 6-phosphate (GlcN6P) to form fructose 6-phosphate (Fru6P) and ammonium ion. The protein is Glucosamine-6-phosphate deaminase of Shewanella woodyi (strain ATCC 51908 / MS32).